Consider the following 376-residue polypeptide: NIF3-like protein 1 (376 aa).

Lys-108 is subject to N6-acetyllysine. The segment at 243–376 is mediates interaction with COPS2; it reads LLLHTGMGRL…ETDRDPLRVV (134 aa). At Thr-254 the chain carries Phosphothreonine. Residue Ser-258 is modified to Phosphoserine.

Belongs to the GTP cyclohydrolase I type 2/NIF3 family. Homodimer. Interacts with COPS2. Interacts with THOC7.

Its subcellular location is the cytoplasm. The protein resides in the nucleus. In terms of biological role, may function as a transcriptional corepressor through its interaction with COPS2, negatively regulating the expression of genes involved in neuronal differentiation. This Rattus norvegicus (Rat) protein is NIF3-like protein 1.